Reading from the N-terminus, the 166-residue chain is Phosphodiesterase MJ0936 (166 aa).

Positions 8, 10, 36, 59, 97, 120, and 122 each coordinate Mn(2+). Residues Asp8, His10, Asp36, Asn59, His97, His120, and His122 each coordinate Ni(2+).

It belongs to the metallophosphoesterase superfamily. YfcE family. As to quaternary structure, monomer. Requires Ni(2+) as cofactor. Mn(2+) serves as cofactor.

Competitively inhibited by phosphate. In terms of biological role, shows phosphodiesterase activity. Hydrolyzes phosphodiesters bonds in the artificial chromogenic substrates bis-p-nitrophenyl phosphate (bis-pNPP), and less efficiently thymidine 5'-monophosphate p-nitrophenyl ester (pNP-TMP) and p-nitrophenylphosphorylcholine (pNPPC). No catalytic activity was found toward cAMP or cGMP, nucleotides or phospholipase substrates such as phosphatidylcholine. The physiological substrate is unknown. The chain is Phosphodiesterase MJ0936 from Methanocaldococcus jannaschii (strain ATCC 43067 / DSM 2661 / JAL-1 / JCM 10045 / NBRC 100440) (Methanococcus jannaschii).